The following is a 605-amino-acid chain: Capsid scaffolding protein (605 aa).

Residues His-48, Ser-116, and His-139 each act as charge relay system in the active site. The segment at 235–274 is disordered; that stretch reads ASDAPDLQKPDKALQSPPPASTDPATMLSGNAGEGATACG. The segment at 281–300 is interaction with pAP; sequence QDLISVPRNTFMTLLQTNLD. Disordered regions lie at residues 403-432 and 489-588; these read DYVPAPSRSNKRKRDPEEDEEGGGLFPGED and PHQS…KSVS. The Nuclear localization signal motif lies at 410–416; the sequence is RSNKRKR. Residues 568-579 are compositionally biased toward polar residues; that stretch reads ASASGVAQSKEP. The interval 585–605 is interaction with major capsid protein; sequence KSVSAHLKSIFCEELLNKRVA.

This sequence belongs to the herpesviridae capsid scaffolding protein family. As to quaternary structure, homomultimer. Interacts with major capsid protein. In terms of assembly, exists in a monomer-dimer equilibrium with the dimer being the active species. Post-translationally, capsid scaffolding protein is cleaved by assemblin after formation of the spherical procapsid. As a result, the capsid obtains its mature, icosahedral shape. Cleavages occur at two or more sites: release (R-site) and maturation (M-site).

The protein resides in the host cytoplasm. It is found in the host nucleus. The enzyme catalyses Cleaves -Ala-|-Ser- and -Ala-|-Ala- bonds in the scaffold protein.. Acts as a scaffold protein by binding major capsid protein in the cytoplasm, inducing the nuclear localization of both proteins. Multimerizes in the nucleus such as major capsid protein forms the icosahedral T=16 capsid. Autocatalytic cleavage releases the assembly protein, and subsequently abolishes interaction with major capsid protein. Cleavages products are evicted from the capsid before or during DNA packaging. In terms of biological role, protease that plays an essential role in virion assembly within the nucleus. Catalyzes the cleavage of the assembly protein after formation of the spherical procapsid. By that cleavage, the capsid matures and gains its icosahedral shape. The cleavage sites seem to include -Ala-Ser-, -Ala-Ala-, as well as Ala-Thr bonds. Assemblin and cleavages products are evicted from the capsid before or during DNA packaging. Its function is as follows. Plays a major role in capsid assembly. Acts as a scaffold protein by binding major capsid protein. Multimerizes in the nucleus such as major capsid protein forms the icosahedral T=16 capsid. Cleaved by assemblin after capsid completion. The cleavages products are evicted from the capsid before or during DNA packaging. The polypeptide is Capsid scaffolding protein (Homo sapiens (Human)).